We begin with the raw amino-acid sequence, 474 residues long: ATP synthase subunit beta (474 aa).

ATP is bound at residue 152–159; sequence GGAGVGKT.

The protein belongs to the ATPase alpha/beta chains family. F-type ATPases have 2 components, CF(1) - the catalytic core - and CF(0) - the membrane proton channel. CF(1) has five subunits: alpha(3), beta(3), gamma(1), delta(1), epsilon(1). CF(0) has four main subunits: a(1), b(1), b'(1) and c(9-12).

It is found in the cell inner membrane. The enzyme catalyses ATP + H2O + 4 H(+)(in) = ADP + phosphate + 5 H(+)(out). In terms of biological role, produces ATP from ADP in the presence of a proton gradient across the membrane. The catalytic sites are hosted primarily by the beta subunits. In Rhodospirillum rubrum (strain ATCC 11170 / ATH 1.1.1 / DSM 467 / LMG 4362 / NCIMB 8255 / S1), this protein is ATP synthase subunit beta.